The following is a 492-amino-acid chain: MSTATHKLLKGATGDWEMVIGMEIHAQVTSNSKLFSGASTAFGGEPNSHVSLVDVAMPGMLPVINEECVRQAVRTGLGLNAKINLRSVFDRKNYFYPDLPQGYQISQYKSPVVGEGEVLVELDGGRSVTVGIERLHIEQDPGKMLHDQSPSLSLIDFNRCGVALMEIVSKPDIRDAEQAKAYVTKLRSIMRYLGTCDGDMEKGNLRADVNVSVRKPGGPLGTRCEIKNMNSINFIGQAIEYEARRQIEILEDGGQIEQETRRFDPDKGETRSMRSKEEAHDYRYFPDPDLLPLEFSQEFVDELKAKLPELPDQKKTRFVADFGLSAYDASVLVAERESAVFYETVLDKLGDRARDGKMAANWVINELFGRLNKEGRDITGSPVTAEQLAAIIDLIGEGTISGKIAKDLFEIVWQEGGDPRALVESRGMKQVTDLSAIEKVVDDIIAANPDKAAQVKDKPQSLGWFVGQVMKASGGKANPQSVNELLKSKLGI.

It belongs to the GatB/GatE family. GatB subfamily. As to quaternary structure, heterotrimer of A, B and C subunits.

It catalyses the reaction L-glutamyl-tRNA(Gln) + L-glutamine + ATP + H2O = L-glutaminyl-tRNA(Gln) + L-glutamate + ADP + phosphate + H(+). It carries out the reaction L-aspartyl-tRNA(Asn) + L-glutamine + ATP + H2O = L-asparaginyl-tRNA(Asn) + L-glutamate + ADP + phosphate + 2 H(+). In terms of biological role, allows the formation of correctly charged Asn-tRNA(Asn) or Gln-tRNA(Gln) through the transamidation of misacylated Asp-tRNA(Asn) or Glu-tRNA(Gln) in organisms which lack either or both of asparaginyl-tRNA or glutaminyl-tRNA synthetases. The reaction takes place in the presence of glutamine and ATP through an activated phospho-Asp-tRNA(Asn) or phospho-Glu-tRNA(Gln). This chain is Aspartyl/glutamyl-tRNA(Asn/Gln) amidotransferase subunit B, found in Bradyrhizobium diazoefficiens (strain JCM 10833 / BCRC 13528 / IAM 13628 / NBRC 14792 / USDA 110).